The primary structure comprises 383 residues: Arginine biosynthesis bifunctional protein ArgJ 1 (383 aa).

A disordered region spans residues methionine 1–aspartate 25. 6 residues coordinate substrate: threonine 146, lysine 168, threonine 179, glutamate 259, asparagine 378, and serine 383. The Nucleophile role is filled by threonine 179.

It belongs to the ArgJ family. As to quaternary structure, heterotetramer of two alpha and two beta chains.

It is found in the cytoplasm. It catalyses the reaction N(2)-acetyl-L-ornithine + L-glutamate = N-acetyl-L-glutamate + L-ornithine. The enzyme catalyses L-glutamate + acetyl-CoA = N-acetyl-L-glutamate + CoA + H(+). Its pathway is amino-acid biosynthesis; L-arginine biosynthesis; L-ornithine and N-acetyl-L-glutamate from L-glutamate and N(2)-acetyl-L-ornithine (cyclic): step 1/1. The protein operates within amino-acid biosynthesis; L-arginine biosynthesis; N(2)-acetyl-L-ornithine from L-glutamate: step 1/4. Catalyzes two activities which are involved in the cyclic version of arginine biosynthesis: the synthesis of N-acetylglutamate from glutamate and acetyl-CoA as the acetyl donor, and of ornithine by transacetylation between N(2)-acetylornithine and glutamate. This is Arginine biosynthesis bifunctional protein ArgJ 1 from Streptomyces clavuligerus.